An 852-amino-acid chain; its full sequence is DNA polymerase kappa (852 aa).

Positions 102-357 (IVHVDMDAFY…LPIRKVSGIG (256 aa)) constitute a UmuC domain. 2 residues coordinate Mg(2+): aspartate 106 and aspartate 197. Residues 252-273 (FEDSPPDLQPQGSPFQLNSEEQ) form a disordered region. Over residues 261-273 (PQGSPFQLNSEEQ) the composition is skewed to polar residues. 2 consecutive UBZ4-type zinc fingers follow at residues 619-649 (TFIC…DGPS) and 761-791 (ALVC…NKGI). 8 residues coordinate Zn(2+): cysteine 622, cysteine 625, histidine 640, cysteine 644, cysteine 764, cysteine 767, histidine 782, and cysteine 786. The segment at 798–852 (SEGNSVKQPKESSRSTDRLQKASGRTKRPGTKTKSSTLKKTKPRDPRHTLDGFFK) is disordered. Positions 805 to 817 (QPKESSRSTDRLQ) are enriched in basic and acidic residues. The segment covering 821–839 (GRTKRPGTKTKSSTLKKTK) has biased composition (basic residues). A compositionally biased stretch (basic and acidic residues) spans 840–852 (PRDPRHTLDGFFK).

This sequence belongs to the DNA polymerase type-Y family. Interacts with PCNA. Interacts with REV1. Requires Mg(2+) as cofactor. Mn(2+) is required as a cofactor. As to expression, detected at low levels in heart, brain, lung, liver, kidney and testis.

It is found in the nucleus. The enzyme catalyses DNA(n) + a 2'-deoxyribonucleoside 5'-triphosphate = DNA(n+1) + diphosphate. In terms of biological role, DNA polymerase specifically involved in DNA repair. Plays an important role in translesion synthesis, where the normal high-fidelity DNA polymerases cannot proceed and DNA synthesis stalls. Depending on the context, it inserts the correct base, but causes frequent base transitions, transversions and frameshifts. Lacks 3'-5' proofreading exonuclease activity. Forms a Schiff base with 5'-deoxyribose phosphate at abasic sites, but does not have lyase activity. In Mus musculus (Mouse), this protein is DNA polymerase kappa (Polk).